Consider the following 197-residue polypeptide: MTDSPQPIQLIVGLGNPGDRYAGTRHNAGFWLLDELLRRHGGALRPERRYHADLATLHLGPHQCRLMRPQTYMNRSGQAVGPYAQFFRLPPESILVVHDEIDLPPGQVKLKQGGGHGGHNGLRDIIRALGNERGFCRARIGVGHPGHRDGVVPYVLSRPAPDERRAIADAVEELADCVEWLLAGDWGRACQRLHSRS.

Y21 is a tRNA binding site. H26 functions as the Proton acceptor in the catalytic mechanism. Residues Y72, N74, and N120 each coordinate tRNA.

This sequence belongs to the PTH family. In terms of assembly, monomer.

It localises to the cytoplasm. It carries out the reaction an N-acyl-L-alpha-aminoacyl-tRNA + H2O = an N-acyl-L-amino acid + a tRNA + H(+). Hydrolyzes ribosome-free peptidyl-tRNAs (with 1 or more amino acids incorporated), which drop off the ribosome during protein synthesis, or as a result of ribosome stalling. In terms of biological role, catalyzes the release of premature peptidyl moieties from peptidyl-tRNA molecules trapped in stalled 50S ribosomal subunits, and thus maintains levels of free tRNAs and 50S ribosomes. This chain is Peptidyl-tRNA hydrolase, found in Alkalilimnicola ehrlichii (strain ATCC BAA-1101 / DSM 17681 / MLHE-1).